The chain runs to 117 residues: MAHTVFVPTGRFPQGIYKKDLSFTLNFRKKNITLDDNFDICVFLVNEEDDEFQVTLTSNEISLVKVIDDENGDKTIEEFIEKIISEEMLHLKNKTQFKKGLYHYNNGDWEQTENLSD.

This is an uncharacterized protein from Acheta domesticus (House cricket).